The sequence spans 284 residues: Four and a half LIM domains protein 5 (284 aa).

The C4-type zinc finger occupies 8–32 (CQYCTASLLGKKYVLKDDNLYCISC). LIM zinc-binding domains are found at residues 39-100 (NYCE…ECSS), 101-160 (KCFH…KEFA), 161-220 (HYCN…LYAK), and 221-283 (KCAA…ADTD).

As to quaternary structure, interacts with CREM (via the third LIM domain). Interacts (via second LIM domain) with SPAG8.

The protein resides in the nucleus. Its function is as follows. May be involved in the regulation of spermatogenesis. Stimulates CREM transcriptional activity in a phosphorylation-independent manner. This is Four and a half LIM domains protein 5 (Fhl5) from Rattus norvegicus (Rat).